The following is a 609-amino-acid chain: Glutamine--fructose-6-phosphate aminotransferase [isomerizing] (609 aa).

Cys-2 acts as the Nucleophile; for GATase activity in catalysis. The 217-residue stretch at 2-218 folds into the Glutamine amidotransferase type-2 domain; the sequence is CGIVGAIAQR…EGDIAEITRR (217 aa). SIS domains follow at residues 286–426 and 458–599; these read ADEL…LKGL and LAED…VDQP. Lys-604 acts as the For Fru-6P isomerization activity in catalysis.

As to quaternary structure, homodimer. In pull-down experiments interacts with CedA.

Its subcellular location is the cytoplasm. It catalyses the reaction D-fructose 6-phosphate + L-glutamine = D-glucosamine 6-phosphate + L-glutamate. In terms of biological role, catalyzes the first step in hexosamine metabolism, converting fructose-6P into glucosamine-6P using glutamine as a nitrogen source. This is Glutamine--fructose-6-phosphate aminotransferase [isomerizing] (glmS) from Escherichia coli (strain K12).